A 341-amino-acid chain; its full sequence is AB hydrolase superfamily protein C1039.03 (341 aa).

Belongs to the AB hydrolase superfamily.

Its subcellular location is the cytoplasm. The protein resides in the nucleus. This chain is AB hydrolase superfamily protein C1039.03, found in Schizosaccharomyces pombe (strain 972 / ATCC 24843) (Fission yeast).